The chain runs to 381 residues: MRCFSCLNTQTNDMRINIDTLSDLTDYASVATKIDPRGTGSKSGILVNGKVNSPKPGGGARSFTFKELAAATKNFREGNIIGKGGFGSVYKGRLDSGQVVAIKQLNPDGHQGNQEFIVEVCMLSVFHHPNLVTLIGYCTSGAQRLLVYEYMPMGSLEDHLFDLEPDQTPLSWYTRMKIAVGAARGIEYLHCKISPSVIYRDLKSANILLDKEFSVKLSDFGLAKVGPVGNRTHVSTRVMGTYGYCAPEYAMSGRLTIKSDIYSFGVVLLELISGRKAIDLSKPNGEQYLVAWARPYLKDPKKFGLLVDPLLRGKFSKRCLNYAISITEMCLNDEANHRPKIGDVVVAFEYIASQSKSYEDRRTARKSTDSNRLRRETKQSY.

A lipid anchor (S-palmitoyl cysteine) is attached at C3. T64 carries the post-translational modification Phosphothreonine. Positions 75 to 351 (FREGNIIGKG…GDVVVAFEYI (277 aa)) constitute a Protein kinase domain. ATP is bound by residues 81 to 89 (IGKGGFGSV) and K103. Phosphotyrosine is present on Y148. Catalysis depends on D201, which acts as the Proton acceptor. Phosphoserine is present on S235. Phosphothreonine is present on residues T236 and T241. Phosphotyrosine is present on Y249. Residues 361 to 381 (RRTARKSTDSNRLRRETKQSY) form a disordered region.

Belongs to the protein kinase superfamily. Ser/Thr protein kinase family. Post-translationally, palmitoylation at Cys-3 and Cys-6 are required for plasma membrane location.

The protein localises to the cell membrane. The catalysed reaction is L-seryl-[protein] + ATP = O-phospho-L-seryl-[protein] + ADP + H(+). The enzyme catalyses L-threonyl-[protein] + ATP = O-phospho-L-threonyl-[protein] + ADP + H(+). Its function is as follows. May be involved in plant defense signaling. In Arabidopsis thaliana (Mouse-ear cress), this protein is Probable serine/threonine-protein kinase PBL22.